A 362-amino-acid chain; its full sequence is tRNA-specific 2-thiouridylase MnmA 3 (362 aa).

Residues 11 to 18 (GMSGGIDS) and methionine 37 contribute to the ATP site. The active-site Nucleophile is the cysteine 91. A disulfide bridge links cysteine 91 with cysteine 188. Residue glycine 115 participates in ATP binding. An interaction with tRNA region spans residues 137–139 (KDQ). Cysteine 188 (cysteine persulfide intermediate) is an active-site residue. An interaction with tRNA region spans residues 296–297 (RY).

The protein belongs to the MnmA/TRMU family.

It is found in the cytoplasm. It catalyses the reaction S-sulfanyl-L-cysteinyl-[protein] + uridine(34) in tRNA + AH2 + ATP = 2-thiouridine(34) in tRNA + L-cysteinyl-[protein] + A + AMP + diphosphate + H(+). In terms of biological role, catalyzes the 2-thiolation of uridine at the wobble position (U34) of tRNA, leading to the formation of s(2)U34. In Bacteroides fragilis (strain YCH46), this protein is tRNA-specific 2-thiouridylase MnmA 3.